Reading from the N-terminus, the 630-residue chain is A-type voltage-gated potassium channel KCND2 (630 aa).

The Cytoplasmic portion of the chain corresponds to 1-184 (MAAGVAAWLP…FENPHTSTMA (184 aa)). Residues 2 to 20 (AAGVAAWLPFARAAAIGWM) form an interaction with KCNIP1, KCNIP2, and other family members region. T38 is modified (phosphothreonine). Residues 71–90 (ERDFFYHPETQQYFFDRDPD) are interaction with KCNIP1. 4 residues coordinate Zn(2+): H105, C111, C132, and C133. The helical transmembrane segment at 185-206 (LVFYYVTGFFIAVSVIANVVET) threads the bilayer. The Extracellular segment spans residues 207–226 (VPCGSSPGHIKELPCGERYA). A helical membrane pass occupies residues 227-249 (VAFFCLDTACVMIFTVEYLLRLA). Topologically, residues 250 to 256 (AAPSRYR) are cytoplasmic. The chain crosses the membrane as a helical span at residues 257–281 (FVRSVMSIIDVVAILPYYIGLVMTD). Residues 282-287 (NEDVSG) are Extracellular-facing. A helical; Voltage-sensor membrane pass occupies residues 288–307 (AFVTLRVFRVFRIFKFSRHS). Residues 308-321 (QGLRILGYTLKSCA) lie on the Cytoplasmic side of the membrane. Residues 308–321 (QGLRILGYTLKSCA) form an S4-S5 linker region. The chain crosses the membrane as a helical span at residues 322 to 345 (SELGFLLFSLTMAIIIFATVMFYA). Over 346 to 357 (EKGSSASKFTSI) the chain is Extracellular. The helical intramembrane region spans 358-369 (PAAFWYTIVTMT). Residues T370, L371, G372, and Y373 each coordinate K(+). The Selectivity filter signature appears at 370 to 375 (TLGYGD). Residues 370–377 (TLGYGDMV) lie within the membrane without spanning it. Topologically, residues 378 to 380 (PKT) are extracellular. Residues 381–403 (IAGKIFGSICSLSGVLVIALPVP) traverse the membrane as a helical segment. Over 404 to 630 (VIVSNFSRIY…GGNIVRVSAL (227 aa)) the chain is Cytoplasmic. Phosphoserine is present on S438. Positions 474–489 (FETQHHHLLHCLEKTT) are required for dendritic targeting. Residues 474-630 (FETQHHHLLH…GGNIVRVSAL (157 aa)) form an important for normal channel activation and inactivation, for interaction with KCNIP2, and probably other family members as well region. Phosphoserine is present on residues S548, S552, S572, and S575. A disordered region spans residues 600 to 623 (IPTPPVTTPEGDDRPESPEYSGGN). Phosphothreonine is present on residues T602 and T607. S616 carries the phosphoserine modification. A PDZ-binding motif is present at residues 627–630 (VSAL).

This sequence belongs to the potassium channel family. D (Shal) (TC 1.A.1.2) subfamily. Kv4.2/KCND2 sub-subfamily. As to quaternary structure, homotetramer or heterotetramer with KCND1 or KCND3. Associates with the regulatory subunits KCNIP2, KCNIP3 and KCNIP4. Interacts with the regulatory subunit KCNIP1; this interaction mediates the capture of both the N- and C-terminus of KCND2, preventing N-type inactivation and stabilizing the S6 conformation, thereby accelerating closed state inactivation and recovery. Interacts with DPP10, DLG4 and DLG1. In vivo, probably exists as heteromeric complex containing variable proportions of KCND1, KCND2, KCND3, KCNIP1, KCNIP2, KCNIP3, KCNIP4, DPP6 and DPP10. The tetrameric channel can associate with up to four regulatory subunits, such as KCNIP2 or KCNIP4. Interaction with KCNIP3 promotes tetramerization and formation of a functional potassium channel. Interaction with four KCNIP4 chains does not reduce interaction with DPP10. Probably part of a complex consisting of KCNIP1, KCNIP2 isoform 3 and KCND2. Interacts with FLNA and FLNC. Interacts with NCS1/FREQ. Identified in a complex with cAMP-dependent protein kinase (PKA), CAV3, AKAP6 and KCND3 in cardiac myocytes. Interacts (via S1 and S2 helices) with DPP6; this interaction stabilizes the conformation of the S1-S2 helices and facilitates S4 conformational change, including S4 sliding up and down, thereby accelerating activation, inactivation, and recovery. In terms of processing, phosphorylation at Ser-438 in response to MAPK activation is increased in stimulated dendrites. Interaction with KCNIP2 and DPP6 propomtes phosphorylation by PKA at Ser-552. Phosphorylation at Ser-552 has no effect on interaction with KCNIP3, but is required for the regulation of channel activity by KCNIP3. Phosphorylation at Ser-552 leads to KCND2 internalization. Phosphorylated by MAPK in response to signaling via the metabotropic glutamate receptor GRM5. Phosphorylation at Ser-616 is required for the down-regulation of neuronal A-type currents in response to signaling via GRM5. As to expression, detected in brain cortex, hippocampus, dentate gyrus, thalamus and cerebellum. Detected in neurons from the primary visual cortex. Detected in the supraoptic nucleus in hypothalamus, in hippocampus and the habenular nucleus of the thalamus. Detected in the bed nucleus of the stria terminalis. Detected in dendritic fields in the hippocampus CA1 layer, in stratum radiatum, stratum oriens, stratum lacunosum-moleculare and stratum pyramidale. Detected in dendritic fields in the hippocampus CA3 layer and in dentate gyrus. Detected in the cerebellum granule cell layer, where it localizes at synapses. Detected in the main olfactory bulb, especially in the granule cell layer and the external plexiform layer, but also the mitral layer. Detected in heart atrium and ventricle. Detected in heart left ventricle (at protein level). Highly expressed in heart and throughout the brain, with similar levels in cortex and hypothalamus, and much higher levels in hippocampus, dentate gyrus and the habenular nucleus of the thalamus. Detected in brain, and at lower levels in heart atrium and ventricle. Detected in neurons from the bed nucleus of the stria terminalis. Detected in aorta, cardiac and smooth muscle.

It is found in the cell membrane. The protein localises to the cell projection. Its subcellular location is the dendrite. It localises to the synapse. The protein resides in the perikaryon. It is found in the postsynaptic cell membrane. The protein localises to the dendritic spine. Its subcellular location is the sarcolemma. It localises to the cell junction. The protein resides in the membrane. It is found in the caveola. The enzyme catalyses K(+)(in) = K(+)(out). With respect to regulation, inhibited by 5 mM 4-aminopyridine (4-AP). Not inhibited by dendrotoxins and by tetraethylammonium (TEA). Inhibited by 10 mM flecainide and 20 mM quinidine. Inhibited by the heteropodatoxins HpTx(1), HpTx(2), and HpTx(3). Functionally, voltage-gated potassium channel that mediates transmembrane potassium transport in excitable membranes, primarily in the brain, but also in rodent heart. Mediates the major part of the dendritic A-type current I(SA) in brain neurons. This current is activated at membrane potentials that are below the threshold for action potentials. It regulates neuronal excitability, prolongs the latency before the first spike in a series of action potentials, regulates the frequency of repetitive action potential firing, shortens the duration of action potentials and regulates the back-propagation of action potentials from the neuronal cell body to the dendrites. Contributes to the regulation of the circadian rhythm of action potential firing in suprachiasmatic nucleus neurons, which regulates the circadian rhythm of locomotor activity. Functions downstream of the metabotropic glutamate receptor GRM5 and plays a role in neuronal excitability and in nociception mediated by activation of GRM5. Mediates the transient outward current I(to) in rodent heart left ventricle apex cells, but not in human heart, where this current is mediated by another family member. Forms tetrameric potassium-selective channels through which potassium ions pass in accordance with their electrochemical gradient. The channel alternates between opened and closed conformations in response to the voltage difference across the membrane. Can form functional homotetrameric channels and heterotetrameric channels that contain variable proportions of KCND2 and KCND3; channel properties depend on the type of pore-forming alpha subunits that are part of the channel. In vivo, membranes probably contain a mixture of heteromeric potassium channel complexes. Interaction with specific isoforms of the regulatory subunits KCNIP1, KCNIP2, KCNIP3 or KCNIP4 strongly increases expression at the cell surface and thereby increases channel activity; it modulates the kinetics of channel activation and inactivation, shifts the threshold for channel activation to more negative voltage values, shifts the threshold for inactivation to less negative voltages and accelerates recovery after inactivation. Likewise, interaction with DPP6 or DPP10 promotes expression at the cell membrane and regulates both channel characteristics and activity. Upon depolarization, the channel goes from a resting closed state (C state) to an activated but non-conducting state (C* state), from there, the channel may either inactivate (I state) or open (O state). The chain is A-type voltage-gated potassium channel KCND2 from Rattus norvegicus (Rat).